Reading from the N-terminus, the 337-residue chain is Large ribosomal subunit protein uL3 (337 aa).

The interval 1–20 is disordered; sequence MASIHRPKRGSLAFSPRKRA.

The protein belongs to the universal ribosomal protein uL3 family. Part of the 50S ribosomal subunit. Forms a cluster with proteins L14 and L24e.

Its function is as follows. One of the primary rRNA binding proteins, it binds directly near the 3'-end of the 23S rRNA, where it nucleates assembly of the 50S subunit. This Methanosarcina acetivorans (strain ATCC 35395 / DSM 2834 / JCM 12185 / C2A) protein is Large ribosomal subunit protein uL3.